The following is a 301-amino-acid chain: uncharacterized protein (301 aa).

Active-site charge relay system residues include Ser44 and Tyr107. The active-site Proton donor is Tyr133. The active-site Schiff-base intermediate with substrate is the Lys162.

Belongs to the DapA family. Homotetramer.

The protein resides in the cytoplasm. This is an uncharacterized protein from Pyrobaculum arsenaticum (strain DSM 13514 / JCM 11321 / PZ6).